The chain runs to 651 residues: MTLFRSSLRLRLPVTLLSPPPIHKHSRLFSASHRLFTAAEMPVDTSQRLAKLRELMKERHVDVYLIPSEDSHQSEYIAPCDARRAFISGFTGSAGCAIVSMSKAALSTDGRYFNQAAKQLDENWLLLKRGMENVPTWQEWTAEQAEGGKVVGVDPSLITAAEARKLSDTIKNTGGSLVGVPDNLVDLVWGGDRPARPREKVMVHPIEFAGQSFEEKITDLRKELTKKKRAGMVISMLDEIAWLYNLRGADIPFNPVFFAYAIVTHSTAELFVDEAKLTQAVKEHLGDKVALRPYESIFESLKLLSQAAASNGDEGHQKFLLSDKASWSLNLALGGEEKVEEVRSPIADAKAVKNAVELEGTRACHIRDGAALTEYFAWLENELINKKTVLNEVDASDKLAQIRSKHKDFVGLSFDTISSTGPNAAIIHYRAERGNCPNIDPNAVYLCDSGAQYLDGTTDTTRTLHFGKPTEMEKKAYTLVLKGLISIDTAVFPKGTTGYAIDAFARQHLWRNGLDYLHGTGHGVGSYLNVHEGPMGIGTRVQYAETPITAGNVLSDEPGYYEDGNFGIRIENIVVAKEVKTPHKFGDKPWIGFEHVTMTPLCQNLMDTSLLTAEEKKWVNDYHTEVWEKTKGFFNNDELTRNWLKRETQPI.

Positions 448, 459, 557, and 571 each coordinate Mn(2+).

It belongs to the peptidase M24B family. Mn(2+) serves as cofactor.

The enzyme catalyses Release of any N-terminal amino acid, including proline, that is linked to proline, even from a dipeptide or tripeptide.. Functionally, catalyzes the removal of a penultimate prolyl residue from the N-termini of peptides. The chain is Probable Xaa-Pro aminopeptidase P (AMPP) from Coccidioides posadasii (strain C735) (Valley fever fungus).